Reading from the N-terminus, the 37-residue chain is Large ribosomal subunit protein bL12 (37 aa).

The protein belongs to the bacterial ribosomal protein bL12 family. Homodimer. Part of the ribosomal stalk of the 50S ribosomal subunit. Forms a multimeric L10(L12)X complex, where L10 forms an elongated spine to which 2 to 4 L12 dimers bind in a sequential fashion. Binds GTP-bound translation factors.

In terms of biological role, forms part of the ribosomal stalk which helps the ribosome interact with GTP-bound translation factors. Is thus essential for accurate translation. The chain is Large ribosomal subunit protein bL12 (rplL) from Clostridium pasteurianum.